We begin with the raw amino-acid sequence, 299 residues long: Sugar transporter SWEET1 (299 aa).

The MtN3/slv 1 domain maps to 7-91 (QVLSISAITT…CVFFLIYSLP (85 aa)). Transmembrane regions (helical) follow at residues 8-28 (VLSISAITTTIALFFCGIPIC), 36-56 (AVGDISGVPFLMGVLGGSFWL), 67-87 (MIIVNVVGVACMAFYCVFFLI), 95-115 (FTCQLILVTSTIGGMVLWIAL), 124-144 (VICMTFNIMNFGAPLAGLGVV), 155-175 (LPMCVANFLVSSQWCLYGNLV), and 180-200 (IIIPNGIGMFLAIVQLALFVV). The 85-residue stretch at 121-205 (YLGVICMTFN…ALFVVLPIRE (85 aa)) folds into the MtN3/slv 2 domain. Positions 230-299 (RGDCIVSSPP…DPDLSSIQSP (70 aa)) are disordered. Residues 247–261 (NETRSDVEDKFDKLM) are compositionally biased toward basic and acidic residues. Residues 276–299 (SMGSPPSYKSRSSSDPDLSSIQSP) show a composition bias toward low complexity.

It belongs to the SWEET sugar transporter family.

It localises to the golgi apparatus membrane. The protein resides in the cell membrane. Its function is as follows. Mediates both low-affinity uptake and efflux of sugar across the membrane. In Caenorhabditis elegans, this protein is Sugar transporter SWEET1 (swt-1).